A 327-amino-acid polypeptide reads, in one-letter code: G-protein coupled receptor 55 (327 aa).

The Extracellular segment spans residues 1 to 20 (MSQPERDNCSFDSVDKLTRT). N-linked (GlcNAc...) asparagine glycosylation occurs at N8. A helical transmembrane segment spans residues 21–41 (LQLAVHIPTFLLGLVLNLLAI). Residues 42 to 57 (RGFSAFLKKRKLDYIA) are Cytoplasmic-facing. A helical membrane pass occupies residues 58–78 (TSIYMINLAVFDLLLVLSLPF). Over 79–93 (KMVLPQVESPLPSFC) the chain is Extracellular. A helical transmembrane segment spans residues 94 to 114 (TLVECLYFISMYGSVFTICFI). Residues 115–136 (SLDRFLAIQYPILASHLRSPRK) lie on the Cytoplasmic side of the membrane. The chain crosses the membrane as a helical span at residues 137-157 (TFGICCIIWMLVWIGSIPIYT). Residues 158-179 (FHREVERYKCFHNMSDVTWSAS) lie on the Extracellular side of the membrane. Residue N170 is glycosylated (N-linked (GlcNAc...) asparagine). A helical transmembrane segment spans residues 180 to 200 (VFFPLEIFGFLLPMGIMGFCS). The Cytoplasmic portion of the chain corresponds to 201 to 239 (YRSIHILLRRPDSTEDWVQQRDTKGWVQKRACIWTIATN). A helical transmembrane segment spans residues 240 to 260 (LVIFVVSFLPVHLGFFLQYLV). Topologically, residues 261-279 (RNRFILDCRMKQGISLFLQ) are extracellular. A helical membrane pass occupies residues 280–300 (LSLCFSNINCCLDVFCYYFVI). Over 301–327 (KEFRMRIKAHRPSTIKLVNQDTMVSRG) the chain is Cytoplasmic.

This sequence belongs to the G-protein coupled receptor 1 family. As to expression, highly expressed in splenic plasma cells.

Its subcellular location is the cell membrane. Its function is as follows. G-protein coupled receptor that binds to several ligands including 2-arachidonoyl lysophosphatidylinositol or lysophosphatidylglucoside with high affinity, leading to rapid and transient activation of numerous intracellular signaling pathways. Induces the Ca(2+) release from intracellular stores via ERK, the heterotrimeric G protein GNA13 and RHOA leading to morphological changes including cell rounding and stress fiber formation. In macrophages, acts downstream of lysophosphatidylglucoside to inhibit the translocation of the phospholipid-transporting ABCA1 to plasma membrane and subsequent cholesterol efflux leading to lipid accumulation and foam cell formation. May be involved in hyperalgesia associated with inflammatory and neuropathic pain. This chain is G-protein coupled receptor 55 (Gpr55), found in Mus musculus (Mouse).